We begin with the raw amino-acid sequence, 716 residues long: Polycystin-2 (716 aa).

2 stretches are compositionally biased toward basic and acidic residues: residues 1-10 (MNYGAADERW) and 30-41 (MVSEEYEHDKKK). The disordered stretch occupies residues 1-44 (MNYGAADERWANPPQPVAAAEHGPSFDHSMVSEEYEHDKKKNPA). Over 1–72 (MNYGAADERW…SDGKIKLTAR (72 aa)) the chain is Cytoplasmic. The chain crosses the membrane as a helical span at residues 73–93 (SFMEVGGYAVFLIVLVYVAFA). The Extracellular segment spans residues 94-324 (QNSIQSYYYS…YQTSGGTRMM (231 aa)). N-linked (GlcNAc...) asparagine glycosylation is found at asparagine 150 and asparagine 177. Cysteine 180 and cysteine 193 are disulfide-bonded. Residues 325–345 (IFEGIFCGFILYFIFEELFAI) traverse the membrane as a helical segment. Residues 346 to 355 (GRHRLHYLTQ) are Cytoplasmic-facing. The helical transmembrane segment at 356 to 376 (FWNLVDVVLLGFSVATIILSV) threads the bilayer. N-linked (GlcNAc...) asparagine glycosylation occurs at asparagine 377. The Extracellular portion of the chain corresponds to 377–409 (NRTKTGVNRVNSVIENGLTNAPFDDVTSSENSY). The chain crosses the membrane as a helical span at residues 410–430 (LNIKACVVFVAWVKVFKFISV). Over 431-447 (NKTMSQLSSTLTRSAKD) the chain is Cytoplasmic. The chain crosses the membrane as a helical span at residues 448 to 468 (IGGFAVMFAVFFFAFAQFGYL). Over 469 to 482 (CFGTQIADYSNLYN) the chain is Extracellular. An intramembrane region (pore-forming) is located at residues 483–497 (SAFALLRLILGDFNF). Over 498 to 510 (SALESCNRFFGPA) the chain is Extracellular. Residues 511 to 531 (FFIAYVFFVSFILLNMFLAII) form a helical membrane-spanning segment. Residues 532–716 (NDSYVEVKAE…ITSIADKKEE (185 aa)) lie on the Cytoplasmic side of the membrane. The residue at position 534 (serine 534) is a Phosphoserine; by CK2. Residues 613-680 (EKVAEDIADE…IEKQRVQQQD (68 aa)) adopt a coiled-coil conformation. The disordered stretch occupies residues 696–716 (RNRESAARRPTITSIADKKEE).

The protein belongs to the polycystin family. In terms of processing, phosphorylated. CK2 (kin-3 and kin-10) and calcineurin act antagonistically to regulate the phosphorylation state. Exclusively expressed in a subset of 3 categories of adult male sensory neurons: ray neurons, hook neurons and head cephalic (CEM) neurons. Expressed in the male tail.

Its subcellular location is the cell membrane. It localises to the cell projection. The protein resides in the cilium membrane. It is found in the cilium. The protein localises to the axon. Its subcellular location is the dendrite. It localises to the perikaryon. The protein resides in the endoplasmic reticulum membrane. In terms of biological role, functions as a calcium permeable cation channel. Required for 2 aspects of male mating behavior: response to hermaphrodite contact and vulva location. Acts in the same pathway as lov-1 and atp-2 in response behavior. In Caenorhabditis elegans, this protein is Polycystin-2.